A 397-amino-acid polypeptide reads, in one-letter code: Lysophospholipid transporter LplT (397 aa).

11 helical membrane-spanning segments follow: residues 21 to 41 (SAQF…LALL), 53 to 73 (ILQM…GQVA), 91 to 111 (LGAA…LVGI), 139 to 159 (LMES…GVLA), 164 to 184 (LAAL…NLFI), 229 to 249 (WGAG…ALGI), 257 to 277 (YLNA…AKLV), 281 to 301 (TVRR…FFSL), 304 to 324 (ALLP…FFIV), 344 to 364 (IAVQ…LYSL), and 372 to 392 (VVGI…GLWI).

It belongs to the major facilitator superfamily. LplT (TC 2.A.1.42) family.

The protein localises to the cell inner membrane. Functionally, catalyzes the facilitated diffusion of 2-acyl-glycero-3-phosphoethanolamine (2-acyl-GPE) into the cell. In Enterobacter sp. (strain 638), this protein is Lysophospholipid transporter LplT.